Here is a 393-residue protein sequence, read N- to C-terminus: tRNA(Met) cytidine acetate ligase (393 aa).

3 residues coordinate ATP: Gly-81, Asn-142, and Arg-167.

It belongs to the TmcAL family.

The protein resides in the cytoplasm. It carries out the reaction cytidine(34) in elongator tRNA(Met) + acetate + ATP = N(4)-acetylcytidine(34) in elongator tRNA(Met) + AMP + diphosphate. Its function is as follows. Catalyzes the formation of N(4)-acetylcytidine (ac(4)C) at the wobble position of elongator tRNA(Met), using acetate and ATP as substrates. First activates an acetate ion to form acetyladenylate (Ac-AMP) and then transfers the acetyl group to tRNA to form ac(4)C34. This Bacillus cereus (strain Q1) protein is tRNA(Met) cytidine acetate ligase.